An 818-amino-acid chain; its full sequence is Piwi-like protein (818 aa).

In terms of domain architecture, PAZ spans 220–339 (RINRVLNDNS…ITGELCFLCG (120 aa)). Residues 501–800 (KIALVFVPDD…LAELIGKVHK (300 aa)) form the Piwi domain.

Belongs to the argonaute family. Piwi subfamily.

This is Piwi-like protein (iwi) from Dugesia japonica (Planarian).